The chain runs to 405 residues: SPbeta prophage-derived uncharacterized protein YomR (405 aa).

Residues 9–36 (QLKQNNIQINSLRGSNDRAEKHMLEHEQ) adopt a coiled-coil conformation.

In Bacillus subtilis (strain 168), this protein is SPbeta prophage-derived uncharacterized protein YomR (yomR).